We begin with the raw amino-acid sequence, 86 residues long: NADH-ubiquinone oxidoreductase chain 4L (86 aa).

Helical transmembrane passes span Leu22–Tyr42 and Phe52–Leu72.

Belongs to the complex I subunit 4L family.

Its subcellular location is the mitochondrion membrane. It carries out the reaction a ubiquinone + NADH + 5 H(+)(in) = a ubiquinol + NAD(+) + 4 H(+)(out). Its function is as follows. Core subunit of the mitochondrial membrane respiratory chain NADH dehydrogenase (Complex I) that is believed to belong to the minimal assembly required for catalysis. Complex I functions in the transfer of electrons from NADH to the respiratory chain. The immediate electron acceptor for the enzyme is believed to be ubiquinone. The chain is NADH-ubiquinone oxidoreductase chain 4L (ND4L) from Artemia salina (Brine shrimp).